The sequence spans 379 residues: Homoserine O-acetyltransferase (379 aa).

Residues 1-24 form a disordered region; the sequence is MSHDTTPPLPATGAWREGDPPGDR. The region spanning 60 to 365 is the AB hydrolase-1 domain; the sequence is NAVLVLHALT…ASGHDGFLTE (306 aa). Serine 165 serves as the catalytic Nucleophile. Residue arginine 236 participates in substrate binding. Catalysis depends on residues aspartate 329 and histidine 359. Aspartate 360 contacts substrate.

It belongs to the AB hydrolase superfamily. MetX family. In terms of assembly, homodimer.

The protein resides in the cytoplasm. The enzyme catalyses L-homoserine + acetyl-CoA = O-acetyl-L-homoserine + CoA. Its pathway is amino-acid biosynthesis; L-methionine biosynthesis via de novo pathway; O-acetyl-L-homoserine from L-homoserine: step 1/1. Transfers an acetyl group from acetyl-CoA to L-homoserine, forming acetyl-L-homoserine. In Thermobifida fusca (strain YX), this protein is Homoserine O-acetyltransferase.